A 418-amino-acid chain; its full sequence is Cell division protein FtsZ (418 aa).

GTP-binding positions include 27–31 (GGGSN), 114–116 (GTG), glutamate 145, lysine 149, and aspartate 193. The tract at residues 386–418 (KNGVKGHTFGVPLPSVNEDLDEPTFLRNRNKGL) is disordered.

The protein belongs to the FtsZ family. Homodimer. Polymerizes to form a dynamic ring structure in a strictly GTP-dependent manner. Interacts directly with several other division proteins.

It localises to the cytoplasm. Its function is as follows. Essential cell division protein that forms a contractile ring structure (Z ring) at the future cell division site. The regulation of the ring assembly controls the timing and the location of cell division. One of the functions of the FtsZ ring is to recruit other cell division proteins to the septum to produce a new cell wall between the dividing cells. Binds GTP and shows GTPase activity. The protein is Cell division protein FtsZ of Treponema pallidum (strain Nichols).